Here is a 319-residue protein sequence, read N- to C-terminus: MRTIAVLTSGGDAPGMNAAIRAVVRTGLEKGLKVMGIQRGYNGLINGEIFEMDTHSVSDIIQRGGTILRTARCEEFRTEQGREKAAKILKAFGIDGLVVIGGDGSFHGAQLLSKLGINTVGLPGTIDNDLAYTDYTIGFDTSINTVLDAINKLRDTSTSHERVSVVEVMGRNCGDIALYTGVAGGAESIIIPEKEYNADKLCKQILQGKLKGKMHNLVLLAEGVGGANELAKYIEEVTGIETRSTILGHIQRGGSPTCMDRILASRMAYKAVELLISGKSSRVVGIKNGEIIDMDIDEALAVERSFDQELYDIATILSK.

An ATP-binding site is contributed by Gly11. 21–25 (RAVVR) is a binding site for ADP. ATP contacts are provided by residues 72 to 73 (RC) and 102 to 105 (GDGS). Residue Asp103 coordinates Mg(2+). 125–127 (TID) contacts substrate. The active-site Proton acceptor is the Asp127. Arg154 provides a ligand contact to ADP. Substrate is bound by residues Arg162 and 169 to 171 (MGR). ADP contacts are provided by residues 185–187 (GAE), Lys211, and 213–215 (KMH). Substrate is bound by residues Glu222, Arg243, and 249–252 (HIQR).

It belongs to the phosphofructokinase type A (PFKA) family. ATP-dependent PFK group I subfamily. Prokaryotic clade 'B1' sub-subfamily. As to quaternary structure, homotetramer. The cofactor is Mg(2+).

It localises to the cytoplasm. The enzyme catalyses beta-D-fructose 6-phosphate + ATP = beta-D-fructose 1,6-bisphosphate + ADP + H(+). The protein operates within carbohydrate degradation; glycolysis; D-glyceraldehyde 3-phosphate and glycerone phosphate from D-glucose: step 3/4. Its activity is regulated as follows. Allosterically activated by ADP and other diphosphonucleosides, and allosterically inhibited by phosphoenolpyruvate. Functionally, catalyzes the phosphorylation of D-fructose 6-phosphate to fructose 1,6-bisphosphate by ATP, the first committing step of glycolysis. In Clostridium botulinum (strain 657 / Type Ba4), this protein is ATP-dependent 6-phosphofructokinase.